We begin with the raw amino-acid sequence, 239 residues long: Small ribosomal subunit protein uS3 (239 aa).

The KH type-2 domain occupies 40–108 (RGLLEKELYS…VALNVQEVQN (69 aa)). Residues 212-239 (KPKARPELPKAEERPRRRRPAVRVKKEE) are disordered. The segment covering 215-226 (ARPELPKAEERP) has biased composition (basic and acidic residues). Over residues 227–239 (RRRRPAVRVKKEE) the composition is skewed to basic residues.

It belongs to the universal ribosomal protein uS3 family. As to quaternary structure, part of the 30S ribosomal subunit. Forms a tight complex with proteins S10 and S14.

In terms of biological role, binds the lower part of the 30S subunit head. Binds mRNA in the 70S ribosome, positioning it for translation. The sequence is that of Small ribosomal subunit protein uS3 (rpsC) from Thermus thermophilus (strain ATCC BAA-163 / DSM 7039 / HB27).